The following is a 205-amino-acid chain: Putative 3-methyladenine DNA glycosylase (205 aa).

It belongs to the DNA glycosylase MPG family.

This Clostridium perfringens (strain 13 / Type A) protein is Putative 3-methyladenine DNA glycosylase.